Here is a 417-residue protein sequence, read N- to C-terminus: Serine hydroxymethyltransferase (417 aa).

(6S)-5,6,7,8-tetrahydrofolate-binding positions include Leu121 and 125–127; that span reads GHL. Residue Lys229 is modified to N6-(pyridoxal phosphate)lysine. Residue 355–357 participates in (6S)-5,6,7,8-tetrahydrofolate binding; that stretch reads SPF.

This sequence belongs to the SHMT family. In terms of assembly, homodimer. Requires pyridoxal 5'-phosphate as cofactor.

The protein localises to the cytoplasm. The catalysed reaction is (6R)-5,10-methylene-5,6,7,8-tetrahydrofolate + glycine + H2O = (6S)-5,6,7,8-tetrahydrofolate + L-serine. It participates in one-carbon metabolism; tetrahydrofolate interconversion. The protein operates within amino-acid biosynthesis; glycine biosynthesis; glycine from L-serine: step 1/1. Its function is as follows. Catalyzes the reversible interconversion of serine and glycine with tetrahydrofolate (THF) serving as the one-carbon carrier. This reaction serves as the major source of one-carbon groups required for the biosynthesis of purines, thymidylate, methionine, and other important biomolecules. Also exhibits THF-independent aldolase activity toward beta-hydroxyamino acids, producing glycine and aldehydes, via a retro-aldol mechanism. In Xylella fastidiosa (strain 9a5c), this protein is Serine hydroxymethyltransferase.